Reading from the N-terminus, the 298-residue chain is 4-hydroxy-tetrahydrodipicolinate synthase (298 aa).

Pyruvate is bound at residue T51. Residue Y139 is the Proton donor/acceptor of the active site. K167 (schiff-base intermediate with substrate) is an active-site residue. A pyruvate-binding site is contributed by I209.

This sequence belongs to the DapA family. As to quaternary structure, homotetramer; dimer of dimers.

It localises to the cytoplasm. It carries out the reaction L-aspartate 4-semialdehyde + pyruvate = (2S,4S)-4-hydroxy-2,3,4,5-tetrahydrodipicolinate + H2O + H(+). It functions in the pathway amino-acid biosynthesis; L-lysine biosynthesis via DAP pathway; (S)-tetrahydrodipicolinate from L-aspartate: step 3/4. Functionally, catalyzes the condensation of (S)-aspartate-beta-semialdehyde [(S)-ASA] and pyruvate to 4-hydroxy-tetrahydrodipicolinate (HTPA). The protein is 4-hydroxy-tetrahydrodipicolinate synthase of Haemophilus influenzae (strain ATCC 51907 / DSM 11121 / KW20 / Rd).